Reading from the N-terminus, the 209-residue chain is Small ribosomal subunit protein uS3 (209 aa).

Residues 38–107 (IRKFIKNRYY…RVVINIEEIK (70 aa)) form the KH type-2 domain.

This sequence belongs to the universal ribosomal protein uS3 family. Part of the 30S ribosomal subunit. Forms a tight complex with proteins S10 and S14.

Binds the lower part of the 30S subunit head. Binds mRNA in the 70S ribosome, positioning it for translation. The chain is Small ribosomal subunit protein uS3 from Thermotoga petrophila (strain ATCC BAA-488 / DSM 13995 / JCM 10881 / RKU-1).